A 148-amino-acid polypeptide reads, in one-letter code: Large ribosomal subunit protein bL9 (148 aa).

The protein belongs to the bacterial ribosomal protein bL9 family.

In terms of biological role, binds to the 23S rRNA. The sequence is that of Large ribosomal subunit protein bL9 from Bacillus cereus (strain ATCC 10987 / NRS 248).